Here is a 207-residue protein sequence, read N- to C-terminus: Large ribosomal subunit protein uL4 (207 aa).

A compositionally biased stretch (basic and acidic residues) spans R44 to R58. The interval R44 to F82 is disordered.

It belongs to the universal ribosomal protein uL4 family. In terms of assembly, part of the 50S ribosomal subunit.

In terms of biological role, one of the primary rRNA binding proteins, this protein initially binds near the 5'-end of the 23S rRNA. It is important during the early stages of 50S assembly. It makes multiple contacts with different domains of the 23S rRNA in the assembled 50S subunit and ribosome. Forms part of the polypeptide exit tunnel. The chain is Large ribosomal subunit protein uL4 from Zymomonas mobilis subsp. mobilis (strain ATCC 31821 / ZM4 / CP4).